The sequence spans 781 residues: Dual specificity protein kinase zakA (781 aa).

2 consecutive Protein kinase domains span residues 9–317 (WEEI…HKLI) and 379–654 (DKDD…EIGL). Residues 15 to 23 (IGEGQYGRV) and K44 contribute to the ATP site. Residue D132 is the Proton acceptor of the active site. Positions 168–209 (ETTNNNNNPNNNNNNNNNNNNNNNNNNNNNNNNNNINNINNN) are disordered. Residues 171 to 209 (NNNNNPNNNNNNNNNNNNNNNNNNNNNNNNNNINNINNN) are compositionally biased toward low complexity. Residues 385-393 (GGAGNFGDV) and K406 contribute to the ATP site. D507 acts as the Proton acceptor in catalysis.

The protein in the N-terminal section; belongs to the protein kinase superfamily. Ser/Thr protein kinase family. In the C-terminal section; belongs to the protein kinase superfamily. TKL Tyr protein kinase family. Post-translationally, N-terminal serine/threonine domain is capable of autophosphorylation, in vitro, but to a lower extent than the tyrosine kinase domain. May function as a negative regulator of the tyrosine kinase domain. In terms of processing, C-terminal tyrosine kinase domain is capable of autophosphorylation, in vitro. In terms of tissue distribution, zakA and zak2 are coexpressed in prestalk cell population, zakA is enriched in pstB populations and zak1 in pstA populations. ZakA and zak2 are coexpressed in prespore cells, zakA expression levels are 10 fold higher than zak2.

It carries out the reaction L-seryl-[protein] + ATP = O-phospho-L-seryl-[protein] + ADP + H(+). It catalyses the reaction L-threonyl-[protein] + ATP = O-phospho-L-threonyl-[protein] + ADP + H(+). The catalysed reaction is L-tyrosyl-[protein] + ATP = O-phospho-L-tyrosyl-[protein] + ADP + H(+). Functionally, positive regulator of gsk3/gskA activity required for cell pattern formation and a downstream effector of carC. The kinases, gsk3/gskA, zakA and zak2, form part of a signaling pathway that responds to extracellular cyclic AMP. The pathway has a role in transcriptional regulation; required to direct prespore/spore fates during development. ZakA negatively regulates prestalk differentiation by regulating expression of ecmB. Phosphorylates Y-214 of gsk3/gskA, in vitro. The chain is Dual specificity protein kinase zakA (zakA) from Dictyostelium discoideum (Social amoeba).